We begin with the raw amino-acid sequence, 341 residues long: Phenylalanine--tRNA ligase alpha subunit (341 aa).

Glutamate 256 is a Mg(2+) binding site.

This sequence belongs to the class-II aminoacyl-tRNA synthetase family. Phe-tRNA synthetase alpha subunit type 1 subfamily. Tetramer of two alpha and two beta subunits. Mg(2+) serves as cofactor.

The protein resides in the cytoplasm. It catalyses the reaction tRNA(Phe) + L-phenylalanine + ATP = L-phenylalanyl-tRNA(Phe) + AMP + diphosphate + H(+). This Chlamydia felis (strain Fe/C-56) (Chlamydophila felis) protein is Phenylalanine--tRNA ligase alpha subunit.